A 126-amino-acid polypeptide reads, in one-letter code: MWKEFKKFAMRGNVIDLAVAVVLGAAFTAIVNSLVNDIFMPLLGIIIGGIDFSSLKASILGVDVLYGNFIQQIVSFFLIAIALFLIVKVINRLQREKEVEEAAIPTPTKEEQLLTEIRDLLKDRSL.

The next 2 helical transmembrane spans lie at 8 to 28 (FAMR…AAFT) and 70 to 90 (IQQI…VKVI).

This sequence belongs to the MscL family. As to quaternary structure, homopentamer.

The protein localises to the cell membrane. Functionally, channel that opens in response to stretch forces in the membrane lipid bilayer. May participate in the regulation of osmotic pressure changes within the cell. This Exiguobacterium sp. (strain ATCC BAA-1283 / AT1b) protein is Large-conductance mechanosensitive channel.